Reading from the N-terminus, the 558-residue chain is V-set and immunoglobulin domain-containing protein 10 (558 aa).

The N-terminal stretch at 1–20 (MAGLRVLLCLGALLARQGSA) is a signal peptide. Over 21–426 (GLQLLLNPSR…IWLSVKEPLN (406 aa)) the chain is Extracellular. 6 N-linked (GlcNAc...) asparagine glycosylation sites follow: Asn-32, Asn-60, Asn-121, Asn-150, Asn-159, and Asn-218. Ig-like C2-type domains are found at residues 37-140 (PNSE…RLRV), 144-235 (PAYV…RKVT), 248-327 (PQCS…VKLS), and 332-420 (PSQP…IWLS). An intrachain disulfide couples Cys-65 to Cys-124. 2 disulfides stabilise this stretch: Cys-174-Cys-221 and Cys-265-Cys-308. Residue Asn-344 is glycosylated (N-linked (GlcNAc...) asparagine). Cys-349 and Cys-404 form a disulfide bridge. Residues 427-447 (IGGIVGTVVSLLLLGLAVVSG) traverse the membrane as a helical segment. The Cytoplasmic portion of the chain corresponds to 448–558 (LTLYYSPAFW…GIVQEDGKPV (111 aa)). The segment covering 477–506 (DSEEEEEEEEEEEEKEDVAEEVEQETNETE) has biased composition (acidic residues). Disordered regions lie at residues 477–515 (DSEEEEEEEEEEEEKEDVAEEVEQETNETEELPKGISKH) and 532–558 (MGNGFQEFQDDSDGQQSGIVQEDGKPV).

The protein localises to the membrane. The polypeptide is V-set and immunoglobulin domain-containing protein 10 (Vsig10) (Mus musculus (Mouse)).